Reading from the N-terminus, the 367-residue chain is UDP-N-acetylglucosamine--N-acetylmuramyl-(pentapeptide) pyrophosphoryl-undecaprenol N-acetylglucosamine transferase (367 aa).

UDP-N-acetyl-alpha-D-glucosamine contacts are provided by residues T15 to G17, N127, R163, S191, I249, and Q294.

Belongs to the glycosyltransferase 28 family. MurG subfamily.

The protein resides in the cell inner membrane. It catalyses the reaction di-trans,octa-cis-undecaprenyl diphospho-N-acetyl-alpha-D-muramoyl-L-alanyl-D-glutamyl-meso-2,6-diaminopimeloyl-D-alanyl-D-alanine + UDP-N-acetyl-alpha-D-glucosamine = di-trans,octa-cis-undecaprenyl diphospho-[N-acetyl-alpha-D-glucosaminyl-(1-&gt;4)]-N-acetyl-alpha-D-muramoyl-L-alanyl-D-glutamyl-meso-2,6-diaminopimeloyl-D-alanyl-D-alanine + UDP + H(+). It participates in cell wall biogenesis; peptidoglycan biosynthesis. Cell wall formation. Catalyzes the transfer of a GlcNAc subunit on undecaprenyl-pyrophosphoryl-MurNAc-pentapeptide (lipid intermediate I) to form undecaprenyl-pyrophosphoryl-MurNAc-(pentapeptide)GlcNAc (lipid intermediate II). The sequence is that of UDP-N-acetylglucosamine--N-acetylmuramyl-(pentapeptide) pyrophosphoryl-undecaprenol N-acetylglucosamine transferase from Burkholderia cenocepacia (strain HI2424).